We begin with the raw amino-acid sequence, 246 residues long: Pyruvate formate-lyase 1-activating enzyme (246 aa).

Positions 16–239 (VDGPGIRFIT…MERVKGILEQ (224 aa)) constitute a Radical SAM core domain. Cys30, Cys34, and Cys37 together coordinate [4Fe-4S] cluster. S-adenosyl-L-methionine contacts are provided by residues 36–38 (YCH), Gly79, 130–132 (DLK), and His203.

This sequence belongs to the organic radical-activating enzymes family. It depends on [4Fe-4S] cluster as a cofactor.

It is found in the cytoplasm. It carries out the reaction glycyl-[formate C-acetyltransferase] + reduced [flavodoxin] + S-adenosyl-L-methionine = glycin-2-yl radical-[formate C-acetyltransferase] + semiquinone [flavodoxin] + 5'-deoxyadenosine + L-methionine + H(+). Its function is as follows. Activation of pyruvate formate-lyase 1 under anaerobic conditions by generation of an organic free radical, using S-adenosylmethionine and reduced flavodoxin as cosubstrates to produce 5'-deoxy-adenosine. This Escherichia coli O157:H7 protein is Pyruvate formate-lyase 1-activating enzyme (pflA).